A 321-amino-acid polypeptide reads, in one-letter code: Beta-ketoacyl-[acyl-carrier-protein] synthase III (321 aa).

Catalysis depends on residues Cys114 and His248. The segment at Gln249–Arg253 is ACP-binding. Residue Asn278 is part of the active site.

This sequence belongs to the thiolase-like superfamily. FabH family. Homodimer.

It localises to the cytoplasm. It catalyses the reaction malonyl-[ACP] + acetyl-CoA + H(+) = 3-oxobutanoyl-[ACP] + CO2 + CoA. The protein operates within lipid metabolism; fatty acid biosynthesis. Catalyzes the condensation reaction of fatty acid synthesis by the addition to an acyl acceptor of two carbons from malonyl-ACP. Catalyzes the first condensation reaction which initiates fatty acid synthesis and may therefore play a role in governing the total rate of fatty acid production. Possesses both acetoacetyl-ACP synthase and acetyl transacylase activities. Its substrate specificity determines the biosynthesis of branched-chain and/or straight-chain of fatty acids. The polypeptide is Beta-ketoacyl-[acyl-carrier-protein] synthase III (Methylococcus capsulatus (strain ATCC 33009 / NCIMB 11132 / Bath)).